A 493-amino-acid chain; its full sequence is Glutamate--tRNA ligase (493 aa).

Positions 9-19 (PSPTGFVHIGS) match the 'HIGH' region motif. Positions 258–262 (KLSKR) match the 'KMSKS' region motif. Residue K261 coordinates ATP.

This sequence belongs to the class-I aminoacyl-tRNA synthetase family. Glutamate--tRNA ligase type 1 subfamily. As to quaternary structure, monomer.

The protein resides in the cytoplasm. It carries out the reaction tRNA(Glu) + L-glutamate + ATP = L-glutamyl-tRNA(Glu) + AMP + diphosphate. Its function is as follows. Catalyzes the attachment of glutamate to tRNA(Glu) in a two-step reaction: glutamate is first activated by ATP to form Glu-AMP and then transferred to the acceptor end of tRNA(Glu). This is Glutamate--tRNA ligase from Clostridioides difficile (strain 630) (Peptoclostridium difficile).